The chain runs to 351 residues: Dihydroorotate dehydrogenase (quinone) (351 aa).

Residues Ala-61–Lys-65 and Thr-85 each bind FMN. Substrate is bound at residue Lys-65. Substrate is bound at residue Asn-110 to Phe-114. Asn-139 and Asn-172 together coordinate FMN. Asn-172 contacts substrate. The Nucleophile role is filled by Ser-175. Asn-177 contacts substrate. Positions 217 and 245 each coordinate FMN. Asn-246–Thr-247 is a binding site for substrate. FMN-binding positions include Gly-268, Gly-297, and Tyr-318–Thr-319.

The protein belongs to the dihydroorotate dehydrogenase family. Type 2 subfamily. As to quaternary structure, monomer. It depends on FMN as a cofactor.

The protein localises to the cell membrane. The enzyme catalyses (S)-dihydroorotate + a quinone = orotate + a quinol. The protein operates within pyrimidine metabolism; UMP biosynthesis via de novo pathway; orotate from (S)-dihydroorotate (quinone route): step 1/1. In terms of biological role, catalyzes the conversion of dihydroorotate to orotate with quinone as electron acceptor. This chain is Dihydroorotate dehydrogenase (quinone), found in Xylella fastidiosa (strain M12).